A 222-amino-acid polypeptide reads, in one-letter code: Large ribosomal subunit protein mL64 (222 aa).

Disordered regions lie at residues 19 to 46 and 188 to 222; these read APGS…EDLL and KRLK…APSS. Over residues 25 to 36 the composition is skewed to basic residues; the sequence is YRARPPPRRRPG. The stretch at 99–212 forms a coiled coil; the sequence is MQESLRVKQL…AAALAAAVAQ (114 aa). Positions 184–200 match the Nuclear localization signal motif; that stretch reads KKERKRLKEEKQKRKKE. Residues 203–212 are compositionally biased toward low complexity; it reads AAALAAAVAQ.

It belongs to the mitochondrion-specific ribosomal protein mL64 family. In terms of assembly, component of the mitochondrial large ribosomal subunit (mt-LSU). Mature mammalian 55S mitochondrial ribosomes consist of a small (28S) and a large (39S) subunit. The 28S small subunit contains a 12S ribosomal RNA (12S mt-rRNA) and 30 different proteins. The 39S large subunit contains a 16S rRNA (16S mt-rRNA), a copy of mitochondrial valine transfer RNA (mt-tRNA(Val)), which plays an integral structural role, and 52 different proteins. Interacts with GADD45A, GADD45B and GADD45G. Interacts with NR4A1 via the NR4A1 AB domain. Interacts with ATAD3A and ATAD3B. As to quaternary structure, (Microbial infection) Interacts with the human papilloma virus type 16 (HPV 16) minor capsid protein L2. Widely expressed. Highly expressed in the thyroid gland, heart, lymph nodes, trachea and adrenal tissues. Expressed at lower level in liver skeletal muscle, kidney, pancreas, testis, ovary and stomach. Barely detectable in adrenal adenoma and papillary thyroid cancer.

The protein localises to the mitochondrion. It is found in the nucleus. Its function is as follows. Acts as a negative regulator of G1 to S cell cycle phase progression by inhibiting cyclin-dependent kinases. Inhibitory effects are additive with GADD45 proteins but also occur in the absence of GADD45 proteins. Acts as a repressor of the orphan nuclear receptor NR4A1 by inhibiting AB domain-mediated transcriptional activity. May be involved in the hormone-mediated regulation of NR4A1 transcriptional activity. May play a role in mitochondrial protein synthesis. The sequence is that of Large ribosomal subunit protein mL64 (GADD45GIP1) from Homo sapiens (Human).